The following is a 1554-amino-acid chain: Lysine-specific demethylase 5C (1554 aa).

The JmjN domain occupies 14 to 55; that stretch reads CPVFEPSWAEFRDPLGYIAKIRPIAEKSGICKIRPPADWQPP. In terms of domain architecture, ARID spans 79 to 169; sequence TRVKLNYLDQ…IVYPYEMYQS (91 aa). Positions 197-207 are enriched in polar residues; that stretch reads LRQSVQPSKFN. A disordered region spans residues 197-227; the sequence is LRQSVQPSKFNSYGRRAKRLQPDPEPTEEDI. Glycyl lysine isopeptide (Lys-Gly) (interchain with G-Cter in SUMO2) cross-links involve residues Lys-205, Lys-229, Lys-244, and Lys-274. Positions 284–303 are disordered; that stretch reads ESTSPKTFLEGKEELSHSPE. Residue Ser-287 is modified to Phosphoserine. A Glycyl lysine isopeptide (Lys-Gly) (interchain with G-Cter in SUMO2) cross-link involves residue Lys-295. Phosphoserine occurs at positions 301 and 317. The segment at 326-372 adopts a PHD-type 1 zinc-finger fold; the sequence is VCRMCSRGDEDDKLLLCDGCDDNYHIFCLLPPLPEIPKGVWRCPKCV. The JmjC domain maps to 468 to 634; the sequence is EYATSGWNLN…AGRQCIEHYR (167 aa). Fe cation is bound by residues His-514, Asp-517, and His-602. Ser-893 and Ser-897 each carry phosphoserine. Lys-1127 is covalently cross-linked (Glycyl lysine isopeptide (Lys-Gly) (interchain with G-Cter in SUMO2)). Residues 1187–1248 form a PHD-type 2 zinc finger; the sequence is ICVCGQVPAG…DTKFLCPLCM (62 aa). Disordered stretches follow at residues 1319 to 1364 and 1437 to 1535; these read SKPE…EGSG and AERH…APFS. The residue at position 1353 (Ser-1353) is a Phosphoserine. A compositionally biased stretch (basic residues) spans 1442–1457; it reads SRTRGRALERRRRRKV. The segment covering 1458–1475 has biased composition (basic and acidic residues); the sequence is DRGGEPDDPAREELEPKR. The segment covering 1482 to 1497 has biased composition (acidic residues); the sequence is EAEEVQEEEELEEETG.

It belongs to the JARID1 histone demethylase family. Part of two distinct complexes, one containing E2F6, and the other containing REST. Interacts with ZMYND8. Requires Fe(2+) as cofactor.

Its subcellular location is the nucleus. The catalysed reaction is N(6),N(6),N(6)-trimethyl-L-lysyl(4)-[histone H3] + 3 2-oxoglutarate + 3 O2 = L-lysyl(4)-[histone H3] + 3 formaldehyde + 3 succinate + 3 CO2. Functionally, histone demethylase that specifically demethylates 'Lys-4' of histone H3, thereby playing a central role in histone code. Does not demethylate histone H3 'Lys-9', H3 'Lys-27', H3 'Lys-36', H3 'Lys-79' or H4 'Lys-20'. Demethylates trimethylated and dimethylated but not monomethylated H3 'Lys-4'. Participates in transcriptional repression of neuronal genes by recruiting histone deacetylases and REST at neuron-restrictive silencer elements. Represses the CLOCK-BMAL1 heterodimer-mediated transcriptional activation of the core clock component PER2. In Mus musculus (Mouse), this protein is Lysine-specific demethylase 5C (Kdm5c).